The primary structure comprises 306 residues: MSSTLRALLCLGLCLSQRISAPKQTLPKPIIRAESTYMVPKEKQATLCCQGSYGAVEYQLHFEGSLFAVERPKPPERINGVKFHIPDMNSRKAGRYSCIYRVGELWSERSDLLDLVVTEMYDTPTLSVHPGPEVTSGEKVTFYCRLDTATSMFLLLKEGRSRDVQRSYGKVQAEFPMGPVTTAHRGSYRCFGSYNNYAWSFPSEPVKLLVTGDIENTSLAPTDPTFPDSWDTCLLTRETGLQKDLALWDHTAQNLLRMGLAFLVLVALVCLLVEDWLSRKRTREQASRASTWEGRRRLNKHKDSEE.

The first 21 residues, 1-21, serve as a signal peptide directing secretion; that stretch reads MSSTLRALLCLGLCLSQRISA. Over 22 to 257 the chain is Extracellular; that stretch reads PKQTLPKPII…WDHTAQNLLR (236 aa). Ig-like domains are found at residues 42 to 100 and 137 to 192; these read EKQA…SCIY and GEKV…RCFG. 2 disulfide bridges follow: Cys49–Cys98 and Cys144–Cys190. N-linked (GlcNAc...) asparagine glycosylation is present at Asn216. Residues 258–278 traverse the membrane as a helical segment; the sequence is MGLAFLVLVALVCLLVEDWLS. Residues 279–306 are Cytoplasmic-facing; sequence RKRTREQASRASTWEGRRRLNKHKDSEE.

The protein belongs to the natural cytotoxicity receptor (NCR) family. As to quaternary structure, interacts with CD3Z and FCER1G. Expressed in NK cells.

The protein localises to the cell membrane. In terms of biological role, cytotoxicity-activating receptor that may contribute to the increased efficiency of activated natural killer (NK) cells to mediate tumor cell lysis. The polypeptide is Natural cytotoxicity triggering receptor 1 (NCR1) (Macaca fascicularis (Crab-eating macaque)).